Here is a 48-residue protein sequence, read N- to C-terminus: MAVPDRRVSKTRAAKRRTHYSVKLAKPVKAKDGTWKLPHHINKFTKEY.

It belongs to the bacterial ribosomal protein bL32 family.

The sequence is that of Large ribosomal subunit protein bL32 from Helicobacter pylori (strain P12).